The following is a 166-amino-acid chain: MSGYSAPRRISDADDVTSFSSGEPSLDDYLRKRALANHVQGGSRCFVTCRDGRVVGFYALASGSVAHADAPGRVRRNMPDPVPVILLSRLAVDRKEQGRGLGSHLLRDAIGRCVQAADSIGLRAILVHALHDEARAFYVHFDFEISPTDPLHLMLLMKDARALIGD.

Residues 1–22 (MSGYSAPRRISDADDVTSFSSG) are disordered. Residues 1 to 162 (MSGYSAPRRI…LMLLMKDARA (162 aa)) enclose the N-acetyltransferase domain. Residue Tyr-138 is part of the active site.

It belongs to the acetyltransferase family. GNAT subfamily. In terms of assembly, homodimer, forms a complex with cognate antitoxin TacA.

The catalysed reaction is glycyl-tRNA(Gly) + acetyl-CoA = N-acetylglycyl-tRNA(Gly) + CoA + H(+). In terms of biological role, toxic component of a type II toxin-antitoxin (TA) system. Overexpression of this gene alone in M.smegmatis inhibits growth, while overexpression of the tacA-tacT operon does not. Acetylates glycyl-tRNA(Gly) but not other tRNAs, blocks in vitro translation in the presence, but not absence, of acetyl-coenzyme A. Peptidyl-tRNA hydrolase (pth) counteracts the product of this enzyme in vitro. Neutralized by cognate antitoxin TacA. Does not seem to be active in laboratory growth conditions. TacA-TacT both represses and derepresses expression of its own operon. This chain is tRNA-acetylating toxin, found in Mycobacterium tuberculosis (strain ATCC 25618 / H37Rv).